A 304-amino-acid chain; its full sequence is uncharacterized protein (304 aa).

Polar residues predominate over residues 226 to 244 (SRNSESSRQSNLNSPNDSV). A disordered region spans residues 226-263 (SRNSESSRQSNLNSPNDSVKFNEFNKSNKSTKTNPNNI). Over residues 246–262 (FNEFNKSNKSTKTNPNN) the composition is skewed to low complexity.

This is an uncharacterized protein from Acanthamoeba polyphaga (Amoeba).